The primary structure comprises 499 residues: Probable alkaline/neutral invertase F (499 aa).

The residue at position 11 (Ser-11) is a Phosphoserine. Residue Thr-20 is modified to Phosphothreonine. Residue Ser-497 is modified to Phosphoserine.

Belongs to the glycosyl hydrolase 100 family.

The enzyme catalyses Hydrolysis of terminal non-reducing beta-D-fructofuranoside residues in beta-D-fructofuranosides.. Its function is as follows. Invertase that cleaves sucrose into glucose and fructose. This Arabidopsis thaliana (Mouse-ear cress) protein is Probable alkaline/neutral invertase F.